The following is a 394-amino-acid chain: MKKRFERIFLIVMDSVGIGEAPDAKEFGDEGANTLGSIAEAFNGLHVPELEKLGLGKIAPLKGVKNVPTPLASYGIMQEASLGKDTMTGHWEIMGLHITKPFQVFPDGFPTELLEQLKSETGRGIIGNKVASGTEILDELGEEHVKTGDLIVYTSADSVLQIAAHEEVVPLEELYDICEKARKLTLAPEYMVGRVIARPFVGEPGKWKRTANRHDYALKPFGRTVMNTLEDAGLASIALGKISDIYDGEGVTKAVRTTSNEDGMDKLAEQINTSFEGLCFLNLVDFDALYGHRRDVIGYGEAIMAFDQRLGEILPQLGDEDLLIVTADHGNDPTHTGTDHTREYVPLLVYNKGIKPVNLGKRRTFADIGATVADNFQVERPSNGTSFLTELKPE.

Residues D14, D287, H292, D328, H329, and H340 each coordinate Mn(2+).

It belongs to the phosphopentomutase family. The cofactor is Mn(2+).

The protein resides in the cytoplasm. It catalyses the reaction 2-deoxy-alpha-D-ribose 1-phosphate = 2-deoxy-D-ribose 5-phosphate. The enzyme catalyses alpha-D-ribose 1-phosphate = D-ribose 5-phosphate. Its pathway is carbohydrate degradation; 2-deoxy-D-ribose 1-phosphate degradation; D-glyceraldehyde 3-phosphate and acetaldehyde from 2-deoxy-alpha-D-ribose 1-phosphate: step 1/2. Its function is as follows. Isomerase that catalyzes the conversion of deoxy-ribose 1-phosphate (dRib-1-P) and ribose 1-phosphate (Rib-1-P) to deoxy-ribose 5-phosphate (dRib-5-P) and ribose 5-phosphate (Rib-5-P), respectively. The polypeptide is Phosphopentomutase (Shouchella clausii (strain KSM-K16) (Alkalihalobacillus clausii)).